We begin with the raw amino-acid sequence, 435 residues long: Serine--tRNA ligase (435 aa).

233 to 235 is a binding site for L-serine; that stretch reads TAE. 264–266 is a binding site for ATP; sequence RAE. An L-serine-binding site is contributed by Glu287. Residue 351-354 coordinates ATP; sequence EISS. L-serine is bound at residue Ser386.

It belongs to the class-II aminoacyl-tRNA synthetase family. Type-1 seryl-tRNA synthetase subfamily. In terms of assembly, homodimer. The tRNA molecule binds across the dimer.

It is found in the cytoplasm. It carries out the reaction tRNA(Ser) + L-serine + ATP = L-seryl-tRNA(Ser) + AMP + diphosphate + H(+). The catalysed reaction is tRNA(Sec) + L-serine + ATP = L-seryl-tRNA(Sec) + AMP + diphosphate + H(+). It functions in the pathway aminoacyl-tRNA biosynthesis; selenocysteinyl-tRNA(Sec) biosynthesis; L-seryl-tRNA(Sec) from L-serine and tRNA(Sec): step 1/1. In terms of biological role, catalyzes the attachment of serine to tRNA(Ser). Is also able to aminoacylate tRNA(Sec) with serine, to form the misacylated tRNA L-seryl-tRNA(Sec), which will be further converted into selenocysteinyl-tRNA(Sec). The sequence is that of Serine--tRNA ligase from Anaeromyxobacter dehalogenans (strain 2CP-C).